A 403-amino-acid chain; its full sequence is O-succinylhomoserine sulfhydrylase (403 aa).

Lys-219 is subject to N6-(pyridoxal phosphate)lysine.

It belongs to the trans-sulfuration enzymes family. MetZ subfamily. As to quaternary structure, homotetramer. The cofactor is pyridoxal 5'-phosphate.

It catalyses the reaction O-succinyl-L-homoserine + hydrogen sulfide = L-homocysteine + succinate. It participates in amino-acid biosynthesis; L-methionine biosynthesis via de novo pathway; L-homocysteine from O-succinyl-L-homoserine: step 1/1. Its function is as follows. Catalyzes the formation of L-homocysteine from O-succinyl-L-homoserine (OSHS) and hydrogen sulfide. Cannot use the other activated form of L-homoserine, O-acetyl-L-homoserine, as a substrate. The polypeptide is O-succinylhomoserine sulfhydrylase (Pseudomonas aeruginosa (strain ATCC 15692 / DSM 22644 / CIP 104116 / JCM 14847 / LMG 12228 / 1C / PRS 101 / PAO1)).